Here is a 2359-residue protein sequence, read N- to C-terminus: Pre-mRNA-processing-splicing factor 8B (2359 aa).

Positions 1-50 are disordered; it reads MWNIDGTSLAPPGTDGSRMQTPSHPADHPSYTAPSNRNTPTVPTPEDAEA. The segment covering 32–41 has biased composition (polar residues); sequence TAPSNRNTPT. The MPN domain maps to 2129-2260; sequence TYIMPKNILK…LTSYKLTQAG (132 aa).

It is found in the nucleus. Functionally, functions as a scaffold that mediates the ordered assembly of spliceosomal proteins and snRNAs. Required for the assembly of the U4/U6-U5 tri-snRNP complex. This chain is Pre-mRNA-processing-splicing factor 8B, found in Arabidopsis thaliana (Mouse-ear cress).